A 69-amino-acid chain; its full sequence is Putative membrane protein insertion efficiency factor (69 aa).

Belongs to the UPF0161 family.

It is found in the cell membrane. Could be involved in insertion of integral membrane proteins into the membrane. This chain is Putative membrane protein insertion efficiency factor, found in Clostridium perfringens (strain SM101 / Type A).